The primary structure comprises 267 residues: PHD finger protein ALFIN-LIKE 7 (267 aa).

The tract at residues Thr162 to Asp207 is disordered. A compositionally biased stretch (low complexity) spans Ser165–Pro188. Over residues Asp196 to Asp207 the composition is skewed to acidic residues. The segment at Ala211–Lys263 adopts a PHD-type zinc-finger fold.

This sequence belongs to the Alfin family. Interacts with H3K4me3 and to a lesser extent with H3K4me2.

The protein resides in the nucleus. Functionally, histone-binding component that specifically recognizes H3 tails trimethylated on 'Lys-4' (H3K4me3), which mark transcription start sites of virtually all active genes. The sequence is that of PHD finger protein ALFIN-LIKE 7 from Oryza sativa subsp. japonica (Rice).